Here is a 492-residue protein sequence, read N- to C-terminus: Cytochrome P450 26A1 (492 aa).

Residue Cys437 participates in heme binding.

It belongs to the cytochrome P450 family. It depends on heme as a cofactor.

It is found in the endoplasmic reticulum membrane. Its subcellular location is the microsome membrane. It carries out the reaction all-trans-retinoate + reduced [NADPH--hemoprotein reductase] + O2 = all-trans-(4S)-hydroxyretinoate + oxidized [NADPH--hemoprotein reductase] + H2O + H(+). It catalyses the reaction all-trans-(4S)-hydroxyretinoate + reduced [NADPH--hemoprotein reductase] + O2 = all-trans-(4S,16)-dihydroxyretinoate + oxidized [NADPH--hemoprotein reductase] + H2O + H(+). The catalysed reaction is all-trans-retinoate + reduced [NADPH--hemoprotein reductase] + O2 = all-trans-18-hydroxyretinoate + oxidized [NADPH--hemoprotein reductase] + H2O + H(+). A cytochrome P450 monooxygenase involved in the metabolism of retinoates (RAs), the active metabolites of vitamin A, and critical signaling molecules in animals. RAs exist as at least four different isomers: all-trans-RA (atRA), 9-cis-RA, 13-cis-RA, and 9,13-dicis-RA, where atRA is considered to be the biologically active isomer, although 9-cis-RA and 13-cis-RA also have activity. Catalyzes the hydroxylation of atRA primarily at C-4 and C-18, thereby contributing to the regulation of atRA homeostasis and signaling. Hydroxylation of atRA limits its biological activity and initiates a degradative process leading to its eventual elimination. Involved in the convertion of atRA to all-trans-4-oxo-RA. Able to metabolize other RAs such as 9-cis, 13-cis and 9,13-di-cis RA. Can oxidize all-trans-13,14-dihydroretinoate (DRA) to metabolites which could include all-trans-4-oxo-DRA, all-trans-4-hydroxy-DRA, all-trans-5,8-epoxy-DRA, and all-trans-18-hydroxy-DRA. May play a role in the oxidative metabolism of xenobiotics such as tazarotenic acid. The sequence is that of Cytochrome P450 26A1 (CYP26A1) from Gallus gallus (Chicken).